A 234-amino-acid chain; its full sequence is Phosphoribosylaminoimidazole-succinocarboxamide synthase (234 aa).

Belongs to the SAICAR synthetase family.

The catalysed reaction is 5-amino-1-(5-phospho-D-ribosyl)imidazole-4-carboxylate + L-aspartate + ATP = (2S)-2-[5-amino-1-(5-phospho-beta-D-ribosyl)imidazole-4-carboxamido]succinate + ADP + phosphate + 2 H(+). It participates in purine metabolism; IMP biosynthesis via de novo pathway; 5-amino-1-(5-phospho-D-ribosyl)imidazole-4-carboxamide from 5-amino-1-(5-phospho-D-ribosyl)imidazole-4-carboxylate: step 1/2. This Pyrococcus furiosus (strain ATCC 43587 / DSM 3638 / JCM 8422 / Vc1) protein is Phosphoribosylaminoimidazole-succinocarboxamide synthase.